The following is a 242-amino-acid chain: Myb-related protein MYBAS2 (242 aa).

2 HTH myb-type domains span residues 5–61 (REEI…HPGL) and 62–112 (KRGR…RKKA). Positions 33-57 (WDFIAKVSGLNRTGKSCRLRWVNYL) form a DNA-binding region, H-T-H motif. The Bipartite nuclear localization signal 1 signature appears at 62 to 65 (KRGR). The segment at residues 85 to 108 (WSRIARRLPGRTDNEIKNYWRTHM) is a DNA-binding region (H-T-H motif). The short motif at 109 to 117 (RKKAQERKS) is the Bipartite nuclear localization signal 2 element. A disordered region spans residues 110-133 (KKAQERKSNMSPSSSSSSLTYQSC). The segment covering 118 to 133 (NMSPSSSSSSLTYQSC) has biased composition (low complexity).

Its subcellular location is the nucleus. Functionally, transcription factor. This is Myb-related protein MYBAS2 (MYBAS2) from Oryza sativa subsp. japonica (Rice).